The sequence spans 537 residues: Nedd4 binding protein 3 (537 aa).

At Ser-172 the chain carries Phosphoserine. Disordered regions lie at residues 173-234, 327-359, and 422-456; these read LDEG…VLSC, RKEL…EEEA, and LQEQ…EARE. Positions 178 to 207 are enriched in low complexity; it reads PEPSLSDSSSGGSFGRSPGTGPSPFSSSLG. Residues 295-523 are a coiled coil; it reads VDRLHEVAQK…LEQELRVLRE (229 aa).

Belongs to the N4BP3 family. In terms of assembly, binds NEDD4. Interacts with 14-3-3 proteins. Interacts with MAVS.

It is found in the cytoplasmic vesicle. It localises to the cell projection. The protein resides in the axon. Its subcellular location is the dendrite. Plays a positive role in the antiviral innate immune signaling pathway. Mechanistically, interacts with MAVS and functions as a positive regulator to promote 'Lys-63'-linked polyubiquitination of MAVS and thus strengthens the interaction between MAVS and TRAF2. Also plays a role in axon and dendrite arborization during cranial nerve development. May also be important for neural crest migration and early development of other anterior structures including eye, brain and cranial cartilage. The sequence is that of Nedd4 binding protein 3 from Rattus norvegicus (Rat).